Here is a 172-residue protein sequence, read N- to C-terminus: Cytidylate kinase (172 aa).

4 to 12 (GPPGSGKST) is an ATP binding site.

This sequence belongs to the cytidylate kinase family. Type 2 subfamily.

It localises to the cytoplasm. The enzyme catalyses CMP + ATP = CDP + ADP. The catalysed reaction is dCMP + ATP = dCDP + ADP. This chain is Cytidylate kinase (cmk), found in Aeropyrum pernix (strain ATCC 700893 / DSM 11879 / JCM 9820 / NBRC 100138 / K1).